The chain runs to 410 residues: Elongation factor Tu, chloroplastic (410 aa).

Residues 10–215 enclose the tr-type G domain; it reads KPHVNIGTIG…NVDSYIPTPE (206 aa). Residues 19-26 are G1; sequence GHVDHGKT. 19-26 provides a ligand contact to GTP; the sequence is GHVDHGKT. Threonine 26 is a Mg(2+) binding site. The segment at 61-65 is G2; sequence GITIN. The interval 82–85 is G3; it reads DCPG. GTP is bound by residues 82 to 86 and 137 to 140; these read DCPGH and NKKD. The interval 137 to 140 is G4; sequence NKKD. Residues 175–177 are G5; that stretch reads SAL.

This sequence belongs to the TRAFAC class translation factor GTPase superfamily. Classic translation factor GTPase family. EF-Tu/EF-1A subfamily.

It is found in the plastid. Its subcellular location is the chloroplast. The catalysed reaction is GTP + H2O = GDP + phosphate + H(+). Its function is as follows. GTP hydrolase that promotes the GTP-dependent binding of aminoacyl-tRNA to the A-site of ribosomes during protein biosynthesis. This is Elongation factor Tu, chloroplastic (tufA) from Oltmannsiellopsis viridis (Marine flagellate).